A 328-amino-acid chain; its full sequence is Protein phosphatase 1 regulatory inhibitor subunit PPP1R7 homolog (328 aa).

LRR repeat units lie at residues 13–36, 37–59, 61–82, 86–110, 111–130, 131–153, 154–177, 179–196, 197–221, 223–240, 241–264, 266–287, and 289–312; these read IGDSNNVLDLTSYQLHSLDTVELP, PNLIELDLTANRLSGLDSRIAQL, TLKKLSLRQNLIDDSAVEPLSH, LSDLEELVLRDNKLAKVPDVSIFTK, LLVYDISFNEITSLEGISKA, SSTLKELYVSKNEVNKIMEIEHL, HNLQILELGSNRLRVMENLENFTK, EELWLGRNRIKVVNLCGL, KCIKKISLQSNRLTSMKGFEECVAL, ELYLSHNGISKMEGLSAL, VNLRVLDVSNNKLTSVDDIQNLTK, EDLWLNDNQIESLEAITEAVTG, and KEKLTTIYLENNPCAKSSDYVAAV.

As to quaternary structure, interacts with human protein phosphatase PPP1C.

In terms of biological role, inhibitor of protein-phosphatase 1 (PP1). Binds to and inhibits PP1 activity. The sequence is that of Protein phosphatase 1 regulatory inhibitor subunit PPP1R7 homolog from Arabidopsis thaliana (Mouse-ear cress).